The primary structure comprises 314 residues: MPRTDNDSWTITESVGATALGVAAARAAETESENPLIEDPFARVFVDAAGDGMWSMFANPALLAGAPEIESQVGARVRQMIDFMATRTAFFDEFFLGAADAGVRQVVILASGLDSRAWRLPWPDGTVVYELDQPRVLEFKSATLRQHGARPTAQLMNIPIDLRQDWPAALLDSGFDASKPTAWSAEGLVRYLPARAQDLLFERIDTLSPAGSWLATNVPQGGFLDPDLVRRQHEEMQRMRAAAGRLVEIQMPAVEDLWYAEERTPVADWLGEHGWRASATTSAELLTRYGRPVPDDAEGPVPPTLFVSAHRPAA.

Residues Asp-132 and Asp-161–Leu-162 contribute to the S-adenosyl-L-methionine site. Residues Arg-291–Ala-314 form a disordered region.

This sequence belongs to the UPF0677 family.

Exhibits S-adenosyl-L-methionine-dependent methyltransferase activity. The polypeptide is Putative S-adenosyl-L-methionine-dependent methyltransferase MUL_4402 (Mycobacterium ulcerans (strain Agy99)).